A 251-amino-acid chain; its full sequence is Uridylate kinase (251 aa).

19–22 (KLSG) is an ATP binding site. Gly-61 serves as a coordination point for UMP. ATP-binding residues include Gly-62 and Arg-66. Residues Asp-81 and 142 to 149 (IGNPFFTT) each bind UMP. ATP is bound by residues Thr-169, Gln-170, Tyr-175, and Asp-178.

It belongs to the UMP kinase family. In terms of assembly, homohexamer.

The protein localises to the cytoplasm. The enzyme catalyses UMP + ATP = UDP + ADP. The protein operates within pyrimidine metabolism; CTP biosynthesis via de novo pathway; UDP from UMP (UMPK route): step 1/1. Inhibited by UTP. Its function is as follows. Catalyzes the reversible phosphorylation of UMP to UDP. The chain is Uridylate kinase from Hyphomonas neptunium (strain ATCC 15444).